The following is a 278-amino-acid chain: Tryptophan synthase alpha chain (278 aa).

Active-site proton acceptor residues include Glu50 and Asp61.

The protein belongs to the TrpA family. Tetramer of two alpha and two beta chains.

The catalysed reaction is (1S,2R)-1-C-(indol-3-yl)glycerol 3-phosphate + L-serine = D-glyceraldehyde 3-phosphate + L-tryptophan + H2O. It participates in amino-acid biosynthesis; L-tryptophan biosynthesis; L-tryptophan from chorismate: step 5/5. Its function is as follows. The alpha subunit is responsible for the aldol cleavage of indoleglycerol phosphate to indole and glyceraldehyde 3-phosphate. This Rhodopseudomonas palustris (strain HaA2) protein is Tryptophan synthase alpha chain.